We begin with the raw amino-acid sequence, 296 residues long: tRNA pseudouridine synthase B (296 aa).

Aspartate 38 acts as the Nucleophile in catalysis.

The protein belongs to the pseudouridine synthase TruB family. Type 1 subfamily.

The catalysed reaction is uridine(55) in tRNA = pseudouridine(55) in tRNA. Responsible for synthesis of pseudouridine from uracil-55 in the psi GC loop of transfer RNAs. The polypeptide is tRNA pseudouridine synthase B (Ehrlichia ruminantium (strain Gardel)).